The following is a 157-amino-acid chain: Transcription elongation factor GreA (157 aa).

Belongs to the GreA/GreB family.

In terms of biological role, necessary for efficient RNA polymerase transcription elongation past template-encoded arresting sites. The arresting sites in DNA have the property of trapping a certain fraction of elongating RNA polymerases that pass through, resulting in locked ternary complexes. Cleavage of the nascent transcript by cleavage factors such as GreA or GreB allows the resumption of elongation from the new 3'terminus. GreA releases sequences of 2 to 3 nucleotides. In Bartonella tribocorum (strain CIP 105476 / IBS 506), this protein is Transcription elongation factor GreA.